The chain runs to 84 residues: Beta-mammal/insect toxin Ts1 (84 aa).

A signal peptide spans 1-20 (MKGMILFISCLLLIGIVVEC). One can recognise an LCN-type CS-alpha/beta domain in the interval 21–82 (KEGYLMDHEG…VWDRATNKCG (62 aa)). Intrachain disulfides connect Cys31/Cys81, Cys35/Cys57, Cys43/Cys62, and Cys47/Cys64. Cys81 bears the Cysteine amide mark.

Belongs to the long (4 C-C) scorpion toxin superfamily. Sodium channel inhibitor family. Post-translationally, C-terminal amidation is important for high activity. In terms of tissue distribution, expressed by the venom gland.

The protein resides in the secreted. Voltage-gated sodium channels (Nav) gating-modifier. Acts both as alpha- and beta-toxin, since it affects not only activation but also inactivation of Nav channels. Binds to Nav domain DII and impairs the four Nav channel voltage sensors movements. Depending on Nav channel subtypes tested, can also bind Nav domains DIII (low affinity) and DIV (very low affinity). Acts on almost all the Nav channels tested (mammalian Nav1.2/SCN2A, Nav1.3/SCN3A, Nav1.4/SCN4A, Nav1.5/SCN5A, Nav1.6/SCN8A, Nav1.9/SCN11A, and insect DmNav1). Is highly active against both mammals and insects. Irreversibly modulates DmNav channels. Other Ts1 activities have been studied, such as immunomodulation, antimicrobial activity or exocrine secretion. This toxin exhibits an antifungal activity against filamentous fungi. In vitro, it has an important immunomodulatory effect on macrophages by stimulating the release of pro-inflammatory cytokines. It also shows an activity in exocrine secretion in pancreas, stomach and adrenal gland. The polypeptide is Beta-mammal/insect toxin Ts1 (Tityus serrulatus (Brazilian scorpion)).